A 410-amino-acid polypeptide reads, in one-letter code: Structural protein ORF142 (410 aa).

Disordered stretches follow at residues 1–24 (MNQNHTLDNERNDDDEHSNNHVDT) and 156–197 (PTST…VNIS). Acidic residues predominate over residues 161–188 (DDNDNENRSDDDDDDDDYRNDREEVEDS).

The protein resides in the virion. The protein is Structural protein ORF142 of Trichoplusia ni ascovirus 2c (TnAV-2c).